The chain runs to 284 residues: Polyamine aminopropyltransferase (284 aa).

In terms of domain architecture, PABS spans 2–237 (ELWYTEEQTQ…GYWLFGFASK (236 aa)). Residue glutamine 31 participates in S-methyl-5'-thioadenosine binding. 2 residues coordinate spermidine: histidine 62 and aspartate 86. Residues glutamate 106 and 137 to 138 (DG) each bind S-methyl-5'-thioadenosine. The active-site Proton acceptor is the aspartate 155. Residue 155–158 (DSTD) coordinates spermidine. Proline 162 is a binding site for S-methyl-5'-thioadenosine.

It belongs to the spermidine/spermine synthase family. As to quaternary structure, homodimer or homotetramer.

The protein resides in the cytoplasm. It catalyses the reaction S-adenosyl 3-(methylsulfanyl)propylamine + putrescine = S-methyl-5'-thioadenosine + spermidine + H(+). It functions in the pathway amine and polyamine biosynthesis; spermidine biosynthesis; spermidine from putrescine: step 1/1. Functionally, catalyzes the irreversible transfer of a propylamine group from the amino donor S-adenosylmethioninamine (decarboxy-AdoMet) to putrescine (1,4-diaminobutane) to yield spermidine. The protein is Polyamine aminopropyltransferase of Alkaliphilus metalliredigens (strain QYMF).